Reading from the N-terminus, the 135-residue chain is Histone H2A (135 aa).

Belongs to the histone H2A family. As to quaternary structure, the nucleosome is a histone octamer containing two molecules each of H2A, H2B, H3 and H4 assembled in one H3-H4 heterotetramer and two H2A-H2B heterodimers. The octamer wraps approximately 147 bp of DNA.

Its subcellular location is the nucleus. It is found in the chromosome. Its function is as follows. Core component of nucleosome. Nucleosomes wrap and compact DNA into chromatin, limiting DNA accessibility to the cellular machineries which require DNA as a template. Histones thereby play a central role in transcription regulation, DNA repair, DNA replication and chromosomal stability. DNA accessibility is regulated via a complex set of post-translational modifications of histones, also called histone code, and nucleosome remodeling. The protein is Histone H2A of Trypanosoma cruzi.